The primary structure comprises 227 residues: Ubiquitin domain-containing protein 1 (227 aa).

Residues Met1–Lys35 form a disordered region. A compositionally biased stretch (basic and acidic residues) spans Gly24 to Lys35. The 76-residue stretch at Phe149–Pro224 folds into the Ubiquitin-like domain.

As to quaternary structure, interacts with UBTD1.

In terms of biological role, may be involved in the regulation of cellular senescence through a positive feedback loop with TP53. Is a TP53 downstream target gene that increases the stability of TP53 protein by promoting the ubiquitination and degradation of MDM2. The protein is Ubiquitin domain-containing protein 1 (UBTD1) of Homo sapiens (Human).